A 151-amino-acid polypeptide reads, in one-letter code: Globin-2 B chain (151 aa).

Position 1 is an N-acetylserine (Ser1). Residues 11 to 151 enclose the Globin domain; that stretch reads VSNADQKDLL…SLVAVVQASL (141 aa). His103 is a binding site for heme b.

It belongs to the globin family. Heterotetramer of two alpha chains and two beta chains.

The polypeptide is Globin-2 B chain (Anadara inaequivalvis (Inequivalve ark)).